A 344-amino-acid chain; its full sequence is Cyanuric acid amidohydrolase (344 aa).

Positions 1-91 (MTVVDIVKRT…ASAFVGTDRP (91 aa)) are RU A. Substrate is bound by residues arginine 51 and 71 to 72 (SG). The interval 97 to 232 (ALVAAVGRTA…CHILVLGNSP (136 aa)) is RU B. Lysine 146 is a catalytic residue. Substrate contacts are provided by residues arginine 178 and 215-216 (SS). Residue serine 215 is the Nucleophile of the active site. The interval 238-344 (LRAVHGVMRD…PVTVVYRVAS (107 aa)) is RU C. Glutamate 276 contributes to the Mg(2+) binding site. Substrate contacts are provided by residues arginine 303 and 322–323 (SG). Alanine 325, glutamine 328, glycine 329, proline 330, and glycine 333 together coordinate Mg(2+).

Belongs to the cyclic amide hydrolase (CyAH) family. Homotetramer.

The enzyme catalyses cyanurate + H2O = 1-carboxybiuret + H(+). Its pathway is xenobiotic degradation; atrazine degradation; biuret from cyanurate: step 1/1. With respect to regulation, inhibited by barbituric acid. Functionally, responsible for the hydrolysis of cyanuric acid, an intermediate formed during catabolism of s-triazine based compounds in herbicides such as atrazine and polymers such as melamine. Catalyzes the hydrolytic opening of the s-triazine ring of cyanuric acid (2,4,6-trihydroxy-s-triazine) to yield carbon dioxide and carboxybiuret, which spontaneously decarboxylates to biuret. This chain is Cyanuric acid amidohydrolase, found in Pseudonocardia dioxanivorans (strain ATCC 55486 / DSM 44775 / JCM 13855 / CB1190).